A 111-amino-acid chain; its full sequence is Translation initiation factor 1A (111 aa).

In terms of domain architecture, S1-like spans 12–86 (GEMPLPSEDE…KKGEVVYRYL (75 aa)).

This sequence belongs to the eIF-1A family.

Functionally, seems to be required for maximal rate of protein biosynthesis. Enhances ribosome dissociation into subunits and stabilizes the binding of the initiator Met-tRNA(I) to 40 S ribosomal subunits. The chain is Translation initiation factor 1A (eIF1A) from Aeropyrum pernix (strain ATCC 700893 / DSM 11879 / JCM 9820 / NBRC 100138 / K1).